A 450-amino-acid chain; its full sequence is MKATKTTYKKDPMGLTPSQIVNELNRFIVGQEKAKKAVAIALRNRCRRKRVEGNLRNEIVPKNILMIGSTGVGKTEIARRLAKLTNSPFYKIEATKFTEVGYVGRDVESIIRDLVEIAVNTKKTLAKMEVDINAREKAIERILDSLVGKTSSSETREKFKEKILNGKLDDTEIEISVADTTPVGGGSFEIPGMPGASMGVLNLGDMIGRALGSSKTKTKKMLVKDAMAIIIPEESEKLIDQEKIIQQAINLAENDGIVFIDEIDKIASTGSSGAKNAEISREGVQRDLLPLIEGTTVNTKYGPVKTDHILFIASGAFHIAKPSDLLPELQGRLPIRVELNSLTKDDMIKILLEPETSLVKQYSALIGTEDVHLEFAASAIEKIADYAITVNLEVEDIGARRLHTILENLLEDISFEASEMKGKKITIDDKFVENQLSKIITNLDLAKFVL.

ATP contacts are provided by residues V29, 71 to 76, D261, E328, and R400; that span reads GVGKTE.

This sequence belongs to the ClpX chaperone family. HslU subfamily. As to quaternary structure, a double ring-shaped homohexamer of HslV is capped on each side by a ring-shaped HslU homohexamer. The assembly of the HslU/HslV complex is dependent on binding of ATP.

The protein localises to the cytoplasm. ATPase subunit of a proteasome-like degradation complex; this subunit has chaperone activity. The binding of ATP and its subsequent hydrolysis by HslU are essential for unfolding of protein substrates subsequently hydrolyzed by HslV. HslU recognizes the N-terminal part of its protein substrates and unfolds these before they are guided to HslV for hydrolysis. The chain is ATP-dependent protease ATPase subunit HslU from Rickettsia felis (strain ATCC VR-1525 / URRWXCal2) (Rickettsia azadi).